Here is a 662-residue protein sequence, read N- to C-terminus: DNA ligase (662 aa).

Residues 34–38 (DYDYD), 83–84 (SI), and Glu-113 each bind NAD(+). Residue Lys-115 is the N6-AMP-lysine intermediate of the active site. NAD(+) contacts are provided by Arg-136, Glu-172, Lys-286, and Lys-310. Positions 404, 407, 422, and 427 each coordinate Zn(2+). The 80-residue stretch at 583–662 (RASASCQGKT…SDLLKILYPN (80 aa)) folds into the BRCT domain.

This sequence belongs to the NAD-dependent DNA ligase family. LigA subfamily. Mg(2+) is required as a cofactor. Mn(2+) serves as cofactor.

The catalysed reaction is NAD(+) + (deoxyribonucleotide)n-3'-hydroxyl + 5'-phospho-(deoxyribonucleotide)m = (deoxyribonucleotide)n+m + AMP + beta-nicotinamide D-nucleotide.. In terms of biological role, DNA ligase that catalyzes the formation of phosphodiester linkages between 5'-phosphoryl and 3'-hydroxyl groups in double-stranded DNA using NAD as a coenzyme and as the energy source for the reaction. It is essential for DNA replication and repair of damaged DNA. This is DNA ligase from Chlamydia felis (strain Fe/C-56) (Chlamydophila felis).